The sequence spans 212 residues: uncharacterized protein (212 aa).

S-adenosyl-L-methionine-binding residues include G53, E74, and D97.

It belongs to the methyltransferase superfamily. YrrT family.

Its function is as follows. Could be a S-adenosyl-L-methionine-dependent methyltransferase. This is an uncharacterized protein from Bacillus cereus (strain 03BB102).